A 129-amino-acid chain; its full sequence is Lysozyme C-1 (129 aa).

Residues 1–129 (KVFERCELAR…VSSYVEGCTL (129 aa)) form the C-type lysozyme domain. 4 disulfide bridges follow: cysteine 6–cysteine 127, cysteine 30–cysteine 115, cysteine 65–cysteine 81, and cysteine 77–cysteine 95. Catalysis depends on residues glutamate 35 and aspartate 53.

This sequence belongs to the glycosyl hydrolase 22 family. As to quaternary structure, monomer.

It catalyses the reaction Hydrolysis of (1-&gt;4)-beta-linkages between N-acetylmuramic acid and N-acetyl-D-glucosamine residues in a peptidoglycan and between N-acetyl-D-glucosamine residues in chitodextrins.. In terms of biological role, lysozymes have primarily a bacteriolytic function; those in tissues and body fluids are associated with the monocyte-macrophage system and enhance the activity of immunoagents. This is Lysozyme C-1 from Capra hircus (Goat).